Here is an 82-residue protein sequence, read N- to C-terminus: UPF0153 protein VC_1057 (82 aa).

The protein belongs to the UPF0153 family.

This chain is UPF0153 protein VC_1057, found in Vibrio cholerae serotype O1 (strain ATCC 39315 / El Tor Inaba N16961).